A 404-amino-acid polypeptide reads, in one-letter code: MKLPIYLDYSATTPVDPRVAEKMMQFLTLDGTFGNPASRSHRFGWQAEEAVDIARNQIAELVGADPREIVFTSGATESDNLAIKGAANFYQKKGKHIITSKTEHKAVLDTCRQLEREGFEVTYLAPQRNGIIDLNELEAAMRDDTILVSIMHVNNEIGVVQDIATIGEMCRARGIIYHVDATQSVGKLPIDLSQLKVDLMSFSGHKIYGPKGIGALYVRRKPRIRIEAQMHGGGHERGMRSGTLPVHQIVGMGEAYRIAKEEMETEMARLRGLRNRLWNGIKDIEEVYLNGDLEQGAPNILNVSFNYVEGESLIMALKDLAVSSGSACTSASLEPSYVLRALGMNDELAHSSIRFSLGRFTTEEEIDYTIDLVRKSIGRLRDLSPLWEMYKQGVDLNSIEWAHH.

Residues 75–76 (AT), Asn-155, Gln-183, and 203–205 (SGH) contribute to the pyridoxal 5'-phosphate site. Lys-206 carries the post-translational modification N6-(pyridoxal phosphate)lysine. Pyridoxal 5'-phosphate is bound at residue Thr-243. Catalysis depends on Cys-328, which acts as the Cysteine persulfide intermediate. Cys-328 contributes to the [2Fe-2S] cluster binding site.

It belongs to the class-V pyridoxal-phosphate-dependent aminotransferase family. NifS/IscS subfamily. As to quaternary structure, homodimer. Forms a heterotetramer with IscU, interacts with other sulfur acceptors. Pyridoxal 5'-phosphate serves as cofactor.

It localises to the cytoplasm. It carries out the reaction (sulfur carrier)-H + L-cysteine = (sulfur carrier)-SH + L-alanine. It functions in the pathway cofactor biosynthesis; iron-sulfur cluster biosynthesis. Master enzyme that delivers sulfur to a number of partners involved in Fe-S cluster assembly, tRNA modification or cofactor biosynthesis. Catalyzes the removal of elemental sulfur and selenium atoms from cysteine and selenocysteine to produce alanine. Functions as a sulfur delivery protein for Fe-S cluster synthesis onto IscU, an Fe-S scaffold assembly protein, as well as other S acceptor proteins. Also functions as a selenium delivery protein in the pathway for the biosynthesis of selenophosphate. The chain is Cysteine desulfurase IscS from Salmonella gallinarum (strain 287/91 / NCTC 13346).